A 177-amino-acid chain; its full sequence is Large ribosomal subunit protein uL6 (177 aa).

The protein belongs to the universal ribosomal protein uL6 family. In terms of assembly, part of the 50S ribosomal subunit.

Functionally, this protein binds to the 23S rRNA, and is important in its secondary structure. It is located near the subunit interface in the base of the L7/L12 stalk, and near the tRNA binding site of the peptidyltransferase center. This chain is Large ribosomal subunit protein uL6, found in Colwellia psychrerythraea (strain 34H / ATCC BAA-681) (Vibrio psychroerythus).